The following is an 833-amino-acid chain: MRYSKLFLCAGLTLATLPCWGRAYTFDSTMLDTNSGESIDVSLFNQGLQLPGNYFVNVFVNGRKVDSGNIDFRLEKHNGKELLWPCLSSLQLTKYGIDIDKYPDLIKSGTEQCVDLLAIPHSDVQFYFNQQKLSLIVPPQALLPRFDGIMPMQLWDDGIPALFMNYNTNMQTRKFREGGKSLDSYYAQLQPGLNIGAWRFRSSTSWWKQQGWQRSYIYAERGLNTIKSRLTLGETYSDSSIFDSIPIKGIKIASDESMVPYYQWNFAPVVRGIARTQARVEVLRDGYTVSNELVPSGPFELANLPLGGGSGELKVIIHESDGTKQVFTVPYDTPAVALRKGYFEYSMMGGEYRPANDLTQTSYVGALGMKYGLPRNLTLYGGLQGSQNYHAAALGIGAMLGDFGAISTDVTQADSQKNKQKKESGQRWRVRYNKYLQSGTSLNIASEEYATEGFNKLADTLNTYCKPNTRNDCRFDYAKPKNKVQFNLSQSIPGSGTLNFSGYRKNYWRDSRSTTSFSVGYNHFFRNGMSLTLNLSKTQNINKYGEKTSELLSNIWLSFPLSRWLGNNSINSNYQMTSDSHGNTTHEVGVYGEAFDRQLYWDVRERFNEKGRKYTSNALNLNYRGTYGEISGNYSYDQTQSQLGIGVNGNMVITQYGITAGQKTGDTIALVQAPDISGASVGYWPGMKTDFRGYTNYGYLTPYRENKVEINPVTLPNDAEITNNIVSVIPTKGAVVLAKFNARIGGRLFLHLKRSDNKPVPFGSIVTIEGQSSSSGIVGDNSGVYLTGLPKKSKILVKWGRDKNQSCSSNVVLPEKTDISGAYRLSTTCILNN.

The first 25 residues, 1–25, serve as a signal peptide directing secretion; sequence MRYSKLFLCAGLTLATLPCWGRAYT. Cys807 and Cys829 are joined by a disulfide.

This sequence belongs to the fimbrial export usher family.

It is found in the cell outer membrane. A probable role in capsular biogenesis. It is likely that the caf1A molecule binds F1 antigen subunits during the extracellular secretion process. The polypeptide is F1 capsule-anchoring protein (caf1A) (Yersinia pestis).